The following is a 59-amino-acid chain: Conorfamide-Vc1 (59 aa).

Residues 1 to 19 (MSGRGFLLLALLLLVTVEA) form the signal peptide. Residues 20–25 (TKVEKK) constitute a propeptide that is removed on maturation. Residues 32 to 39 (AWSGPRNR) form a positively charged region crucial for activity against MRGPRX1 receptors region. Phenylalanine 43 bears the Phenylalanine amide mark. A propeptide spanning residues 45 to 59 (RRDMQSPLLSERLRL) is cleaved from the precursor.

This sequence belongs to the FARP (FMRFamide related peptide) family. As to expression, expressed by the venom duct.

Its subcellular location is the secreted. Functionally, this peptide activates human and mouse sensory neuron-specific G-protein coupled receptors MRGPRX1. The activity on human receptors has been measured (EC(50)=1.8 uM). Compared with the agonist chloroquine (anti-malaria drug), it is 200-fold more potent. The peptide also causes an increase in cytosolic calcium in a specific subset of DRG neurons, and, in contrast to other Conus venom peptides, the peptide also affects a large fraction of the non-neuronal cells. In vivo, when intracranially injected into mice, it principally renders mice unable to move, and at very low doses, it causes hyperactivity. It also induces itch sensation, since intradermal cheek injection into humanized transgenic mouse (mouse MRGPRX1 replaced by human MRGPRX1) induces scratching. In vivo, when tested at high doses (10 uM) on zebrafish larvae, it induces a range of behavioral effects ranging from an early hypoactivity during the first hour of treatment to an increase in movement during the following hours when the larvae are submitted to strobe light phases. The polypeptide is Conorfamide-Vc1 (Conus victoriae (Queen Victoria cone)).